We begin with the raw amino-acid sequence, 1083 residues long: Protein HOS4 (1083 aa).

Disordered stretches follow at residues 1-233 (MNET…RKLV) and 267-328 (SSLF…YRDS). Phosphoserine occurs at positions 14 and 16. A compositionally biased stretch (basic and acidic residues) spans 24 to 62 (TRREELEKISKQETSEEEDTAGKHEQRETLSEEVSDKFP). A Phosphothreonine modification is found at T37. The residue at position 67 (S67) is a Phosphoserine. Residues 67–85 (SFRSQTTSVHQATQNNLNA) show a composition bias toward polar residues. Over residues 86-118 (KESEDLAHKNDASSHEGEVNGDSRPDDVPETNE) the composition is skewed to basic and acidic residues. Residues 135-149 (PNVRNVDIQNHQPFS) are compositionally biased toward polar residues. Over residues 151 to 166 (DQLRAMLKEPKRKTVD) the composition is skewed to basic and acidic residues. Acidic residues predominate over residues 167 to 185 (DFIEEEGLGAVEEEDLSDE). Basic and acidic residues predominate over residues 186–207 (VLEKNTTEPENVEKDIEYSDSD). Positions 277–293 (VKETNNNLSNMNSSPAQ) are enriched in polar residues. S290 is subject to Phosphoserine. Positions 300–310 (VSRSNDSNKSS) are enriched in low complexity. Residues 314–323 (VSKRPKQKKG) are compositionally biased toward basic residues. 3 ANK repeats span residues 329–359 (GGRTRLQIACDKGKYDVVKKMIEEGGYDIND), 363–392 (AGNTALHEAALQGHIEIVELLIENGADVNI), and 398–427 (FGDTPLIDASANGHLDVVKYLLKNGADPTI). The segment at 472 to 516 (AGIHNDKSKNGNNAHTIDQPPFDNTTKAKNEKAADSPSMASNIDE) is disordered. Positions 481-496 (NGNNAHTIDQPPFDNT) are enriched in polar residues. Position 507 is a phosphoserine (S507). ANK repeat units follow at residues 532–561 (AGKEKLFKASKEGHLPYVGTYVENGGKIDL) and 593–622 (NKTSALMVAVGRGHLGTVKLLLEAGADPTK). Disordered stretches follow at residues 661-742 (HSED…DDNE) and 762-790 (DEEKLKSISPLSMEPHSPKKAKSVEISKI). Acidic residues predominate over residues 665-675 (NNDDDDDDDNN). S698 is subject to Phosphoserine. T700 is subject to Phosphothreonine. Residues 721–740 (NNDRDVKESTTSDSRKRLDD) show a composition bias toward basic and acidic residues. S778 is modified (phosphoserine).

In terms of assembly, identified in the Set3C complex with HOS2, HST1, SNT1, SIF2, CPR1 and SET3.

Unknown. Component of the Set3C complex, which is required to repress early/middle sporulation genes during meiosis. In Saccharomyces cerevisiae (strain ATCC 204508 / S288c) (Baker's yeast), this protein is Protein HOS4 (HOS4).